The sequence spans 215 residues: Beta-crystallin A3 (215 aa).

An N-acetylmethionine modification is found at Met1. Residues 1 to 16 show a composition bias toward low complexity; the sequence is METQAEQQELETLPTT. The segment at 1–29 is disordered; sequence METQAEQQELETLPTTKMAQTNPTPGSLG. The N-terminal arm stretch occupies residues 1–30; sequence METQAEQQELETLPTTKMAQTNPTPGSLGP. Glu2 is modified (N-acetylalanine). Beta/gamma crystallin 'Greek key' domains lie at 31-70 and 71-117; these read WKIT…KVES and GAWI…RPIC. Residues Cys82 and Cys117 each carry the S-glutathionyl cysteine; alternate modification. S-methylcysteine; alternate occurs at positions 82 and 117. The segment at 118-123 is connecting peptide; it reads SANHKE. Beta/gamma crystallin 'Greek key' domains lie at 124-165 and 166-214; these read SKMT…KIQS and GAWV…RRIQ. Cys185 is subject to S-methylcysteine.

Belongs to the beta/gamma-crystallin family. As to quaternary structure, homo/heterodimer, or complexes of higher-order. The structure of beta-crystallin oligomers seems to be stabilized through interactions between the N-terminal arms. Interacts with CRYBA1. Post-translationally, specific cleavages in the N-terminal arm occur during lens maturation and give rise to several truncated forms. Cleavages do not seem to have adverse effects on solubility. S-methylation and glutathionylation occur in normal young lenses and do not seem to be detrimental.

Crystallins are the dominant structural components of the vertebrate eye lens. This is Beta-crystallin A3 from Homo sapiens (Human).